Reading from the N-terminus, the 366-residue chain is Alanine racemase (366 aa).

Lysine 35 acts as the Proton acceptor; specific for D-alanine in catalysis. Lysine 35 is subject to N6-(pyridoxal phosphate)lysine. Position 130 (arginine 130) interacts with substrate. Tyrosine 254 acts as the Proton acceptor; specific for L-alanine in catalysis. Methionine 302 serves as a coordination point for substrate.

This sequence belongs to the alanine racemase family. Pyridoxal 5'-phosphate serves as cofactor.

The enzyme catalyses L-alanine = D-alanine. It participates in amino-acid biosynthesis; D-alanine biosynthesis; D-alanine from L-alanine: step 1/1. In terms of biological role, catalyzes the interconversion of L-alanine and D-alanine. May also act on other amino acids. The polypeptide is Alanine racemase (alr) (Variovorax paradoxus (strain S110)).